The chain runs to 294 residues: Ferredoxin--NADP reductase (294 aa).

An FAD-binding FR-type domain is found at 13–137 (KNPYIGKCLS…TGPVGKEMLL (125 aa)). FAD-binding positions include 72–75 (RLYS), 93–95 (CVR), Tyr-99, 111–113 (VCS), and Thr-152. Residues Ser-75 and Arg-95 each contribute to the NADP(+) site. NADP(+) is bound by residues Thr-152, 184–185 (IP), 214–215 (SR), Lys-224, 224–228 (KMYIQ), 253–254 (GL), and Glu-292.

It belongs to the ferredoxin--NADP reductase type 1 family. FAD is required as a cofactor.

It is found in the cellular thylakoid membrane. It carries out the reaction 2 reduced [2Fe-2S]-[ferredoxin] + NADP(+) + H(+) = 2 oxidized [2Fe-2S]-[ferredoxin] + NADPH. This chain is Ferredoxin--NADP reductase (petH), found in Spirulina sp.